The chain runs to 379 residues: UDP-4-amino-4-deoxy-L-arabinose--oxoglutarate aminotransferase (379 aa).

Lysine 182 is subject to N6-(pyridoxal phosphate)lysine.

Belongs to the DegT/DnrJ/EryC1 family. ArnB subfamily. Homodimer. Pyridoxal 5'-phosphate serves as cofactor.

The catalysed reaction is UDP-4-amino-4-deoxy-beta-L-arabinose + 2-oxoglutarate = UDP-beta-L-threo-pentopyranos-4-ulose + L-glutamate. Its pathway is nucleotide-sugar biosynthesis; UDP-4-deoxy-4-formamido-beta-L-arabinose biosynthesis; UDP-4-deoxy-4-formamido-beta-L-arabinose from UDP-alpha-D-glucuronate: step 2/3. It participates in bacterial outer membrane biogenesis; lipopolysaccharide biosynthesis. Catalyzes the conversion of UDP-4-keto-arabinose (UDP-Ara4O) to UDP-4-amino-4-deoxy-L-arabinose (UDP-L-Ara4N). The modified arabinose is attached to lipid A and is required for resistance to polymyxin and cationic antimicrobial peptides. This Shigella boydii serotype 4 (strain Sb227) protein is UDP-4-amino-4-deoxy-L-arabinose--oxoglutarate aminotransferase.